A 229-amino-acid chain; its full sequence is Ribonuclease HII (229 aa).

An RNase H type-2 domain is found at 34–223; the sequence is WPVAGADEAG…LRKVEDGPQM (190 aa). Positions 40, 41, and 131 each coordinate a divalent metal cation.

It belongs to the RNase HII family. Requires Mn(2+) as cofactor. Mg(2+) is required as a cofactor.

The protein resides in the cytoplasm. It catalyses the reaction Endonucleolytic cleavage to 5'-phosphomonoester.. Endonuclease that specifically degrades the RNA of RNA-DNA hybrids. The polypeptide is Ribonuclease HII (Rhizobium leguminosarum bv. trifolii (strain WSM2304)).